Here is a 256-residue protein sequence, read N- to C-terminus: Pimeloyl-[acyl-carrier protein] methyl ester esterase (256 aa).

Residues 15 to 242 (HLVLLHGWGL…AAHAPFISHP (228 aa)) enclose the AB hydrolase-1 domain. Substrate is bound by residues W22, 82–83 (SL), and 143–147 (FLALQ). The active-site Nucleophile is S82. Catalysis depends on residues D207 and H235. Substrate is bound at residue H235.

The protein belongs to the AB hydrolase superfamily. Carboxylesterase BioH family. As to quaternary structure, monomer.

The protein resides in the cytoplasm. It catalyses the reaction 6-carboxyhexanoyl-[ACP] methyl ester + H2O = 6-carboxyhexanoyl-[ACP] + methanol + H(+). Its pathway is cofactor biosynthesis; biotin biosynthesis. Its function is as follows. The physiological role of BioH is to remove the methyl group introduced by BioC when the pimeloyl moiety is complete. It allows to synthesize pimeloyl-ACP via the fatty acid synthetic pathway through the hydrolysis of the ester bonds of pimeloyl-ACP esters. This chain is Pimeloyl-[acyl-carrier protein] methyl ester esterase, found in Escherichia coli O127:H6 (strain E2348/69 / EPEC).